We begin with the raw amino-acid sequence, 437 residues long: Matrix remodeling-associated protein 8 (437 aa).

The first 22 residues, 1 to 22, serve as a signal peptide directing secretion; sequence MEQLAKLLLWQLLLQQSSVVYL. Topologically, residues 23 to 339 are extracellular; it reads YSVPADASNP…PESRIHFFQQ (317 aa). 2 Ig-like V-type domains span residues 32–159 and 167–294; these read PDSV…LDIT and EYWD…VFVT. 4 N-linked (GlcNAc...) asparagine glycosylation sites follow: N41, N121, N246, and N304. Intrachain disulfides connect C54–C139 and C188–C274. The helical transmembrane segment at 340 to 360 threads the bilayer; it reads LGYVLATLLLFVVLLIIVVFI. The Cytoplasmic portion of the chain corresponds to 361–437; that stretch reads TRKRRQRGYE…DKDFRKEYCK (77 aa).

As to quaternary structure, homodimer in cis. Does not appear to form trans-homodimers.

It is found in the cell membrane. Transmembrane protein which can modulate activity of various signaling pathways, probably via binding to integrin ITGAV:ITGB3. Mediates heterophilic cell-cell interactions in vitro. This is Matrix remodeling-associated protein 8 (MXRA8) from Gallus gallus (Chicken).